A 217-amino-acid chain; its full sequence is 3,4-dihydroxy-2-butanone 4-phosphate synthase (217 aa).

Residues 37–38, aspartate 42, 150–154, and glutamate 174 each bind D-ribulose 5-phosphate; these read RE and RQGHT. Glutamate 38 lines the Mg(2+) pocket. Residue histidine 153 participates in Mg(2+) binding.

This sequence belongs to the DHBP synthase family. As to quaternary structure, homodimer. Mg(2+) is required as a cofactor. Mn(2+) serves as cofactor.

The enzyme catalyses D-ribulose 5-phosphate = (2S)-2-hydroxy-3-oxobutyl phosphate + formate + H(+). It participates in cofactor biosynthesis; riboflavin biosynthesis; 2-hydroxy-3-oxobutyl phosphate from D-ribulose 5-phosphate: step 1/1. In terms of biological role, catalyzes the conversion of D-ribulose 5-phosphate to formate and 3,4-dihydroxy-2-butanone 4-phosphate. This chain is 3,4-dihydroxy-2-butanone 4-phosphate synthase, found in Desulforamulus reducens (strain ATCC BAA-1160 / DSM 100696 / MI-1) (Desulfotomaculum reducens).